A 301-amino-acid polypeptide reads, in one-letter code: Protoheme IX farnesyltransferase (301 aa).

Helical transmembrane passes span 29–49 (VVAL…PGVV), 51–71 (IVPL…AAAF), 96–118 (VSIA…VLYV), 123–143 (LTAW…TAYL), 151–171 (IVVG…AVTG), 177–197 (ALLL…ALAI), 223–243 (CIFL…LVGM), 244–264 (CGPV…YKAW), and 281–301 (FSIY…YLWL).

Belongs to the UbiA prenyltransferase family. Protoheme IX farnesyltransferase subfamily.

It is found in the cell inner membrane. It carries out the reaction heme b + (2E,6E)-farnesyl diphosphate + H2O = Fe(II)-heme o + diphosphate. It functions in the pathway porphyrin-containing compound metabolism; heme O biosynthesis; heme O from protoheme: step 1/1. In terms of biological role, converts heme B (protoheme IX) to heme O by substitution of the vinyl group on carbon 2 of heme B porphyrin ring with a hydroxyethyl farnesyl side group. In Shewanella halifaxensis (strain HAW-EB4), this protein is Protoheme IX farnesyltransferase.